We begin with the raw amino-acid sequence, 342 residues long: Phosphate acyltransferase (342 aa).

The protein belongs to the PlsX family. As to quaternary structure, homodimer. Probably interacts with PlsY.

Its subcellular location is the cytoplasm. It carries out the reaction a fatty acyl-[ACP] + phosphate = an acyl phosphate + holo-[ACP]. It participates in lipid metabolism; phospholipid metabolism. Its function is as follows. Catalyzes the reversible formation of acyl-phosphate (acyl-PO(4)) from acyl-[acyl-carrier-protein] (acyl-ACP). This enzyme utilizes acyl-ACP as fatty acyl donor, but not acyl-CoA. This Shewanella amazonensis (strain ATCC BAA-1098 / SB2B) protein is Phosphate acyltransferase.